The sequence spans 168 residues: Skp-like protein (168 aa).

A signal peptide spans M1 to A22.

This sequence belongs to the Skp family.

The polypeptide is Skp-like protein (Pseudomonas aeruginosa (strain ATCC 15692 / DSM 22644 / CIP 104116 / JCM 14847 / LMG 12228 / 1C / PRS 101 / PAO1)).